We begin with the raw amino-acid sequence, 503 residues long: MDLIPNFSMETWMLLATSLVLLYLYGTHSHGIFKKLGIPGPKPLPFLGTILAYQKGFWECDIQCHKKYGKMWGLYDGRQPVLAITDPDIIKTVLVKECYSTFTNRRRFGPVGILKKAISISENEEWKRIRALLSPTFTSGRLKEMFPIINQFTDVLVRNMRQGLGEGKPTSMKDIFGAYSMDVITATSFGVNIDSLNNPQDPFVEKIKKLLKFDIFDPLFLSVTLFPFLTPVFDALNVSLFPRDVISFFTTSVERMKENRMKEKEKQRVDFLQLMINSQNYKTKESHKALSDVEIVAQSVIFIFAGYETTSSALSFALYLLAIHPDVQKKLQDEIDAALPNKAPATYDTLLQMEYLDMVVNETLRLYPIAGRLERVCKTDVEINGLFIPKGTVVMIPTFALHKDPKYWPEPEEFRPERFSKKNQDSINPYMYLPFGSGPRNCIGMRFALINMKVALVRVLQNFTVQPCKETEIPLKLSKQGLLQPENPLLLKVVSRDETVSDE.

Heme is bound at residue Cys-442.

The protein belongs to the cytochrome P450 family. Requires heme as cofactor.

The protein localises to the endoplasmic reticulum membrane. The protein resides in the microsome membrane. The catalysed reaction is an organic molecule + reduced [NADPH--hemoprotein reductase] + O2 = an alcohol + oxidized [NADPH--hemoprotein reductase] + H2O + H(+). Functionally, can activate aflatoxin B1 to a genotoxic product. In Mus musculus (Mouse), this protein is Cytochrome P450 3A13 (Cyp3a13).